The following is a 227-amino-acid chain: Large ribosomal subunit protein uL3 (227 aa).

This sequence belongs to the universal ribosomal protein uL3 family. As to quaternary structure, part of the 50S ribosomal subunit. Forms a cluster with proteins L14 and L19.

One of the primary rRNA binding proteins, it binds directly near the 3'-end of the 23S rRNA, where it nucleates assembly of the 50S subunit. This is Large ribosomal subunit protein uL3 from Leuconostoc citreum (strain KM20).